A 141-amino-acid polypeptide reads, in one-letter code: Relaxin-3 (141 aa).

The first 24 residues, 1 to 24, serve as a signal peptide directing secretion; the sequence is MAMLGLLLLASWALLGALGLQAEA. 3 disulfides stabilise this stretch: cysteine 34-cysteine 128, cysteine 46-cysteine 141, and cysteine 127-cysteine 132. Positions 54 to 117 are cleaved as a propeptide — connecting peptide; the sequence is ADILAHESLG…GSPGVVRGSR (64 aa).

The protein belongs to the insulin family. As to quaternary structure, heterodimer of a B chain and an A chain linked by two disulfide bonds. High expression in the brain localized to the pons/medulla with highest levels in pars ventromedialis of the dorsal tegmental nucleus. Significant expression is also detected in the spleen, thymus, lung, testis and ovary.

It is found in the secreted. In terms of biological role, may play a role in neuropeptide signaling processes. Ligand for LGR7, relaxin-3 receptor-1 and relaxin-3 receptor-2. The polypeptide is Relaxin-3 (Rln3) (Mus musculus (Mouse)).